The sequence spans 765 residues: Amyloid beta precursor like protein 2 (765 aa).

Residues M1–A31 form the signal peptide. Residues G32–S695 are Extracellular-facing. Residues A46 to V139 form a GFLD subdomain region. Residues A46–Q205 enclose the E1 domain. Intrachain disulfides connect C56–C80, C91–C133, C116–C123, C149–C203, C160–C190, and C174–C202. The segment at E147–Q205 is cuBD subdomain. Residues H163, H167, and Y184 each contribute to the Cu cation site. The segment at S211 to D301 is disordered. S216 is subject to Phosphoserine. Composition is skewed to acidic residues over residues E218–Y231 and T240–E271. Positions D272–D284 are enriched in basic and acidic residues. In terms of domain architecture, BPTI/Kunitz inhibitor spans V308 to I366. Cystine bridges form between C312–C362, C321–C345, and C337–C358. In terms of domain architecture, E2 spans D375–L566. S592 is subject to Phosphoserine. Residues E597 to T616 form a disordered region. S628 carries O-linked (Xyl...) (chondroitin sulfate) serine glycosylation. The chain crosses the membrane as a helical span at residues A696 to L718. The Cytoplasmic segment spans residues R719 to I765. The interval G751–I765 is interaction with DAB2. An NPXY motif motif is present at residues Y752–Y757.

This sequence belongs to the APP family. Interacts with CPEB1. Interacts (via NPXY motif) with DAB2 (via PID domain); the interaction is impaired by tyrosine phosphorylation of the NPXY motif. Interacts (via cytoplasmic domain) with APBB2/FE65L. Interacts (via intracellular domain) with APBB3/FE65L2.

Its subcellular location is the membrane. In terms of biological role, may play a role in the regulation of hemostasis. The soluble form may have inhibitory properties towards coagulation factors. May interact with cellular G-protein signaling pathways. May bind to the DNA 5'-GTCACATG-3'(CDEI box). Inhibits trypsin, chymotrypsin, plasmin, factor XIA and plasma and glandular kallikrein. Modulates the Cu/Zn nitric oxide-catalyzed autodegradation of GPC1 heparan sulfate side chains in fibroblasts. The polypeptide is Amyloid beta precursor like protein 2 (Rattus norvegicus (Rat)).